The following is a 191-amino-acid chain: Protein YceI (191 aa).

A signal peptide spans 1–22 (MKKNLLGFTLASLLFTTGSAVA).

This sequence belongs to the UPF0312 family. Type 1 subfamily.

Its subcellular location is the periplasm. The chain is Protein YceI from Salmonella dublin (strain CT_02021853).